A 632-amino-acid polypeptide reads, in one-letter code: Actin-related protein 8 (632 aa).

Basic and acidic residues predominate over residues 1–30 (MTQAEREQENGKEKEKEREKEKEKEKEQRG). The interval 1 to 43 (MTQAEREQENGKEKEKEREKEKEKEKEQRGIKRPIAPPVIPEP) is disordered. 288-291 (DVGD) is a binding site for ATP. Disordered regions lie at residues 410–429 (MTSL…DEHY) and 434–494 (QSKQ…GGAE). Positions 434–443 (QSKQDQSSKA) are enriched in low complexity.

This sequence belongs to the actin family. ARP8 subfamily. In terms of assembly, component of the chromatin remodeling INO80 complex; specifically part of a complex module associated with the DBINO domain of INO80. Exists as monomers and dimers, but the dimer is most probably the biologically relevant form required for stable interactions with histones that exploits the twofold symmetry of the nucleosome core.

It localises to the nucleus. The protein localises to the chromosome. Functionally, plays an important role in the functional organization of mitotic chromosomes. Exhibits low basal ATPase activity, and unable to polymerize. In terms of biological role, proposed core component of the chromatin remodeling INO80 complex which is involved in transcriptional regulation, DNA replication and probably DNA repair. Required for the recruitment of INO80 (and probably the INO80 complex) to sites of DNA damage Strongly prefer nucleosomes and H3-H4 tetramers over H2A-H2B dimers, suggesting it may act as a nucleosome recognition module within the complex. This is Actin-related protein 8 (actr8) from Salmo salar (Atlantic salmon).